Consider the following 1358-residue polypeptide: Probable serine/threonine-protein kinase ifkB (1358 aa).

The region spanning 1–582 (MIGKGGFGVV…TKQLLESGLL (582 aa)) is the Protein kinase domain. ATP-binding positions include 2-10 (IGKGGFGVV) and Lys25. Residues 125–359 (GANNTAGGGD…SSSRKKPPKE (235 aa)) form a disordered region. Residues 136 to 148 (VSNANSNKSMIVG) show a composition bias toward polar residues. The span at 149-196 (NNNKKLTLSSSNTSSSSSLLSNNKSKILNTSKSTSTNTSTSTSTSNTN) shows a compositional bias: low complexity. The segment covering 197–208 (KNKKISKKKKSK) has biased composition (basic residues). A compositionally biased stretch (low complexity) spans 258 to 285 (NNNNDSNNNYHSDNESDSFSGSISMSDG). Positions 306 to 333 (DDNENDDDDEEDDDDEYDEEDDDYETFD) are enriched in acidic residues. Low complexity predominate over residues 342 to 351 (SNNSKLSTSS). Asp413 serves as the catalytic Proton acceptor. Disordered stretches follow at residues 445–470 (DDLN…TAQQ) and 1148–1204 (GSGG…QQTS). Residues 447-466 (LNSSTSNAANNINLSSSTNS) show a composition bias toward low complexity. Residues 1148–1172 (GSGGSGGSGGGSSMSSGGGGGGNSN) are compositionally biased toward gly residues. Residues 1185–1199 (SNQSTSSSGNSNNSN) are compositionally biased toward low complexity.

Belongs to the protein kinase superfamily. Ser/Thr protein kinase family. GCN2 subfamily.

It catalyses the reaction L-seryl-[protein] + ATP = O-phospho-L-seryl-[protein] + ADP + H(+). The catalysed reaction is L-threonyl-[protein] + ATP = O-phospho-L-threonyl-[protein] + ADP + H(+). The chain is Probable serine/threonine-protein kinase ifkB (ifkB) from Dictyostelium discoideum (Social amoeba).